Here is a 253-residue protein sequence, read N- to C-terminus: 5'-nucleotidase SurE (253 aa).

4 residues coordinate a divalent metal cation: aspartate 8, aspartate 9, serine 39, and asparagine 92.

This sequence belongs to the SurE nucleotidase family. A divalent metal cation serves as cofactor.

It localises to the cytoplasm. It catalyses the reaction a ribonucleoside 5'-phosphate + H2O = a ribonucleoside + phosphate. Its function is as follows. Nucleotidase that shows phosphatase activity on nucleoside 5'-monophosphates. The sequence is that of 5'-nucleotidase SurE from Burkholderia pseudomallei (strain 668).